The following is a 38-amino-acid chain: Large ribosomal subunit protein bL36 (38 aa).

Belongs to the bacterial ribosomal protein bL36 family.

The polypeptide is Large ribosomal subunit protein bL36 (Phytoplasma australiense).